We begin with the raw amino-acid sequence, 98 residues long: MPRSLKKGPFIDIKLEKRILEMNSKGEKKVVKTWSRSSMISPDFVGHTVAVHNGKSHVPVYVGDNMVGHKLGEFAPTRNYRGHAGGKSEKGGSAPRKK.

The disordered stretch occupies residues 74–98 (FAPTRNYRGHAGGKSEKGGSAPRKK).

The protein belongs to the universal ribosomal protein uS19 family.

Functionally, protein S19 forms a complex with S13 that binds strongly to the 16S ribosomal RNA. The protein is Small ribosomal subunit protein uS19 of Chlorobium chlorochromatii (strain CaD3).